The primary structure comprises 339 residues: Phenylalanine--tRNA ligase alpha subunit (339 aa).

A Mg(2+)-binding site is contributed by glutamate 254.

This sequence belongs to the class-II aminoacyl-tRNA synthetase family. Phe-tRNA synthetase alpha subunit type 1 subfamily. Tetramer of two alpha and two beta subunits. It depends on Mg(2+) as a cofactor.

It is found in the cytoplasm. The enzyme catalyses tRNA(Phe) + L-phenylalanine + ATP = L-phenylalanyl-tRNA(Phe) + AMP + diphosphate + H(+). This chain is Phenylalanine--tRNA ligase alpha subunit, found in Dictyoglomus thermophilum (strain ATCC 35947 / DSM 3960 / H-6-12).